The primary structure comprises 657 residues: KNR4/SMI1 homolog (657 aa).

Disordered regions lie at residues 168-193 (EQQQ…QKGY), 366-402 (SSSV…ESVS), and 416-657 (LTQT…TVAL). The span at 174–187 (KSSSELPQTVTPQA) shows a compositional bias: polar residues. Positions 416–436 (LTQTDASSKGTTKPATPNPMT) are enriched in polar residues. 2 stretches are compositionally biased toward low complexity: residues 444-455 (STPGSPSAAAEA) and 473-482 (TPTVTKESTP). Basic and acidic residues predominate over residues 492 to 504 (LDSKNTETNEDTR). The span at 505-521 (ATNTAHSMAPTVSSAIT) shows a compositional bias: polar residues. Composition is skewed to basic and acidic residues over residues 535 to 561 (KPKD…KANE), 569 to 604 (VEPK…EKKV), and 627 to 650 (KSDK…KLNE).

This sequence belongs to the KNR4/SMI1 family.

The protein is KNR4/SMI1 homolog of Eremothecium gossypii (strain ATCC 10895 / CBS 109.51 / FGSC 9923 / NRRL Y-1056) (Yeast).